A 186-amino-acid polypeptide reads, in one-letter code: Nuclear transcription factor Y subunit B-1 (186 aa).

The disordered stretch occupies residues Met1–Gly24. The DNA-binding element occupies Leu34–Val40. Residues Thr61–Val72 are subunit association domain (SAD). The interval Gly123–Gly142 is disordered.

It belongs to the NFYB/HAP3 subunit family. As to quaternary structure, heterotrimeric transcription factor composed of three components, NF-YA, NF-YB and NF-YC. NF-YB and NF-YC must interact and dimerize for NF-YA association and DNA binding. Interacts with MADS18. Forms a ternary complex with the MADS6-MADS18 heterodimer. Expressed in developing kernels.

The protein localises to the nucleus. Its function is as follows. Component of the NF-Y/HAP transcription factor complex. The NF-Y complex stimulates the transcription of various genes by recognizing and binding to a CCAAT motif in promoters. May act through association with MADS-box proteins. May regulate the expression of genes involved in flowering. This chain is Nuclear transcription factor Y subunit B-1 (NFYB1), found in Oryza sativa subsp. japonica (Rice).